The following is a 941-amino-acid chain: Probable respiratory burst oxidase homolog protein I (941 aa).

Over 1–374 (MSMSFSGGTH…LYSLQDNWKR (374 aa)) the chain is Cytoplasmic. 2 disordered regions span residues 29 to 48 (PSLP…SGEE) and 103 to 166 (ERLT…SGTE). Over residues 36 to 45 (SPSPSSSSSS) the composition is skewed to low complexity. A compositionally biased stretch (polar residues) spans 103–117 (ERLTAGTNSKQQIQK). EF-hand-like stretches follow at residues 196-204 (SKDGYLFKS) and 232-243 (RRIMVDKINLQE). Positions 254-289 (ESFDSRLQIFFNMVKNGDGRITENEVKEIIILSASA) constitute an EF-hand domain. Asn269, Asp271, Arg273, and Glu278 together coordinate Ca(2+). 2 positions are modified to phosphoserine: Ser346 and Ser350. The chain crosses the membrane as a helical span at residues 375–395 (IWVLTLWFVIMAWLFMWKCYQ). The Extracellular segment spans residues 396-407 (YKHKDAFHVMGY). Residues 408–428 (CLVMAKGAAETLKFNMALILL) traverse the membrane as a helical segment. Residues 413–570 (KGAAETLKFN…LLLTVYVLLV (158 aa)) form the Ferric oxidoreductase domain. Residues 429 to 514 (PVCRNTITYL…YFGLVNTPVG (86 aa)) lie on the Cytoplasmic side of the membrane. A helical membrane pass occupies residues 515–535 (ITGIIMVAFMLIAFTLASRRC). The Extracellular portion of the chain corresponds to 536-557 (RRNLTKLPKPFDKLTGYNAFWY). A helical membrane pass occupies residues 558–578 (SHHLLLTVYVLLVIHGVSLYL). Residues 579–586 (EHKWYRKT) lie on the Cytoplasmic side of the membrane. A helical transmembrane segment spans residues 587–604 (VWMYLAVPVLLYVGERIF). At 605–731 (RFFRSRLYTV…PYGAPAQDHW (127 aa)) the chain is on the extracellular side. One can recognise an FAD-binding FR-type domain in the interval 609 to 729 (SRLYTVEICK…DGPYGAPAQD (121 aa)). Residues 732–752 (KYDVVLLVGLGIGATPFVSIL) form a helical membrane-spanning segment. Residues 753 to 941 (RDLLNNIIKQ…TRFDFHKEQF (189 aa)) are Cytoplasmic-facing.

Belongs to the RBOH (TC 5.B.1.3) family. In terms of assembly, monomer and homodimer.

Its subcellular location is the membrane. In terms of biological role, calcium-dependent NADPH oxidase that generates superoxide. In Arabidopsis thaliana (Mouse-ear cress), this protein is Probable respiratory burst oxidase homolog protein I (RBOHI).